We begin with the raw amino-acid sequence, 432 residues long: Cyclic GMP-AMP synthase-like receptor (432 aa).

ATP contacts are provided by residues serine 59 and 71 to 73 (EFD). Mg(2+) is bound by residues glutamate 71, aspartate 73, and aspartate 205. GTP contacts are provided by residues aspartate 205 and 255 to 262 (KQTCSVLE). Residues 259-262 (SVLE), lysine 284, and 303-307 (TYALK) each bind ATP.

It belongs to the mab-21 family. Requires Mg(2+) as cofactor. The cofactor is Mn(2+).

The catalysed reaction is GTP + ATP = 2',3'-cGAMP + 2 diphosphate. It carries out the reaction GTP + ATP = pppGp(2'-5')A + diphosphate. It catalyses the reaction pppGp(2'-5')A = 2',3'-cGAMP + diphosphate. Nucleotidyltransferase that catalyzes the formation of cyclic GMP-AMP (2',3'-cGAMP) from ATP and GTP and plays a key role in innate immunity. Directly binds some unknown ligand, activating the nucleotidyltransferase activity, leading to synthesis of 2',3'-cGAMP, a second messenger that binds to and activates Sting, thereby triggering the immune response via activation of the NF-kappa-B transcription factor. This is Cyclic GMP-AMP synthase-like receptor from Pocillopora damicornis (Cauliflower coral).